A 72-amino-acid polypeptide reads, in one-letter code: Translation initiation factor IF-1 (72 aa).

Positions 1 to 72 constitute an S1-like domain; it reads MAKEGAIEVE…TRGRIVYRYK (72 aa).

Belongs to the IF-1 family. As to quaternary structure, component of the 30S ribosomal translation pre-initiation complex which assembles on the 30S ribosome in the order IF-2 and IF-3, IF-1 and N-formylmethionyl-tRNA(fMet); mRNA recruitment can occur at any time during PIC assembly.

It localises to the cytoplasm. Its function is as follows. One of the essential components for the initiation of protein synthesis. Stabilizes the binding of IF-2 and IF-3 on the 30S subunit to which N-formylmethionyl-tRNA(fMet) subsequently binds. Helps modulate mRNA selection, yielding the 30S pre-initiation complex (PIC). Upon addition of the 50S ribosomal subunit IF-1, IF-2 and IF-3 are released leaving the mature 70S translation initiation complex. The polypeptide is Translation initiation factor IF-1 (Corynebacterium glutamicum (strain R)).